The primary structure comprises 113 residues: Hydrogenase maturation factor HypA (113 aa).

His-2 contributes to the Ni(2+) binding site. The Zn(2+) site is built by Cys-73, Cys-76, Cys-89, and Cys-92.

The protein belongs to the HypA/HybF family.

Its function is as follows. Involved in the maturation of [NiFe] hydrogenases. Required for nickel insertion into the metal center of the hydrogenase. This Rhodobacter capsulatus (Rhodopseudomonas capsulata) protein is Hydrogenase maturation factor HypA.